The sequence spans 560 residues: Cilia- and flagella-associated protein 184 (560 aa).

Over residues 1–12 (MEGGSEHTKDPG) the composition is skewed to basic and acidic residues. A disordered region spans residues 1-209 (MEGGSEHTKD…QEEGKPLGGR (209 aa)). 2 stretches are compositionally biased toward acidic residues: residues 41-61 (GELE…EEEA) and 101-110 (EPEEPAEAGA). Composition is skewed to basic and acidic residues over residues 127-144 (AEAR…KEVR) and 179-209 (ETRR…LGGR). 2 coiled-coil regions span residues 357–481 (QAAL…QGRD) and 510–536 (DSLL…LKRH).

The protein belongs to the CFAP184 family. Forms a complex with CFAP263; the interaction is required for functional activity in cilia.

The protein localises to the cell projection. The protein resides in the cilium. It is found in the cytoplasm. It localises to the cytoskeleton. Its subcellular location is the microtubule organizing center. The protein localises to the centrosome. In terms of biological role, in complex with CFAP263, acts as a regulator of ciliary beating that connects radial spoke 3 (RS3) to the inner dynein arm (IDA) and the nexin-dynein regulatory complex (N-DRC). The complex is positioned parallel to N-DRC and forms a connection between the arch at the base of RS3, the IDA tail and N-DRC. In Macaca fascicularis (Crab-eating macaque), this protein is Cilia- and flagella-associated protein 184 (CFAP184).